A 416-amino-acid chain; its full sequence is Serine/threonine transporter SstT (416 aa).

The next 9 membrane-spanning stretches (helical) occupy residues 14–34, 43–63, 82–102, 141–161, 192–212, 220–240, 298–318, 339–359, and 363–383; these read GSIVLQIMFGLVAGMALALLS, FLGTLFVKALKGVAPVLVFVL, VLVLYLVGTFLAALVGVVASF, ALATGNFIGILAWAAALGVAL, IGVFGLVADAIATTGFSALMG, LLGSMLFIALVVNPLIVFLAI, MAGAAITISVLSLAAVHTLGV, ASGVAGGSLLLIPLACSLFGI, and VAMQMVAVGFIIGVIQDSAET.

This sequence belongs to the dicarboxylate/amino acid:cation symporter (DAACS) (TC 2.A.23) family.

It is found in the cell inner membrane. The catalysed reaction is L-serine(in) + Na(+)(in) = L-serine(out) + Na(+)(out). It catalyses the reaction L-threonine(in) + Na(+)(in) = L-threonine(out) + Na(+)(out). In terms of biological role, involved in the import of serine and threonine into the cell, with the concomitant import of sodium (symport system). The polypeptide is Serine/threonine transporter SstT (Laribacter hongkongensis (strain HLHK9)).